A 314-amino-acid polypeptide reads, in one-letter code: ATP synthase gamma chain (314 aa).

It belongs to the ATPase gamma chain family. In terms of assembly, F-type ATPases have 2 components, CF(1) - the catalytic core - and CF(0) - the membrane proton channel. CF(1) has five subunits: alpha(3), beta(3), gamma(1), delta(1), epsilon(1). CF(0) has three main subunits: a, b and c.

The protein localises to the cellular thylakoid membrane. Its function is as follows. Produces ATP from ADP in the presence of a proton gradient across the membrane. The gamma chain is believed to be important in regulating ATPase activity and the flow of protons through the CF(0) complex. This chain is ATP synthase gamma chain, found in Gloeothece citriformis (strain PCC 7424) (Cyanothece sp. (strain PCC 7424)).